We begin with the raw amino-acid sequence, 559 residues long: 5-epiaristolochene synthase (559 aa).

Residues Asp-312, Asp-316, Asp-455, Thr-459, and Glu-463 each coordinate Mg(2+). Positions 312–316 (DDTYD) match the DDXXD motif motif.

It belongs to the terpene synthase family. Monomer. The cofactor is Mg(2+). As to expression, expressed only in treated leaves an not detected in control leaves.

Its subcellular location is the cytoplasm. The enzyme catalyses (2E,6E)-farnesyl diphosphate = (+)-5-epi-aristolochene + diphosphate. It participates in secondary metabolite biosynthesis; terpenoid biosynthesis. Its function is as follows. Catalyzes the cyclization of trans,trans-farnesyl diphosphate (FPP) to the bicyclic intermediate 5-epi-aristolochene, initial step in the conversion of FPP to the sesquiterpenoid antifungal phytoalexin capsidiol. Produces germacrene A as an enzyme-bound intermediate that is not released by the enzyme, but is further cyclized to produce the bicyclic 5-epi-aristolochene. This is 5-epiaristolochene synthase (EAS) from Capsicum annuum (Capsicum pepper).